Here is a 260-residue protein sequence, read N- to C-terminus: MYVIQINKATKTYNNGTIAVHPTSLNFEPGTFNAILGPSGAGKSTLLRMINGLEIPTTGEIIIQGQTLTAKNLRQVRSRTAMVFQQFNLVGRLNVMTNILTGRLYYIPWWSSILYMFGQRDWKIAQWALNRVSLKEKAWERVDRLSGGQQQRVGVARALAQRPEVILADEPVASLDPIASEEIMELLREICRQDGITIVANLHQVSLALRYADRVIGLNKGRVVFDDSPQALSNNKNTLRTIYQREDGSVDDTLEMAVTD.

The ABC transporter domain maps to 4–245 (IQINKATKTY…KNTLRTIYQR (242 aa)). 37–44 (GPSGAGKS) serves as a coordination point for ATP.

This sequence belongs to the ABC transporter superfamily. Phosphonates importer (TC 3.A.1.9.1) family. In terms of assembly, the complex is composed of two ATP-binding proteins (PhnC), two transmembrane proteins (PhnE) and a solute-binding protein (PhnD).

Its subcellular location is the cell inner membrane. It carries out the reaction phosphonate(out) + ATP + H2O = phosphonate(in) + ADP + phosphate + H(+). In terms of biological role, part of the ABC transporter complex PhnCDE involved in phosphonates import. Responsible for energy coupling to the transport system. The protein is Phosphonates import ATP-binding protein PhnC 2 of Trichodesmium erythraeum (strain IMS101).